The following is a 203-amino-acid chain: Transcriptional regulator GfcR (203 aa).

The protein belongs to the purine/pyrimidine phosphoribosyltransferase family. GfcR subfamily.

The chain is Transcriptional regulator GfcR from Methanothrix thermoacetophila (strain DSM 6194 / JCM 14653 / NBRC 101360 / PT) (Methanosaeta thermophila).